The chain runs to 2118 residues: Separin (2118 aa).

S1121 is subject to Phosphoserine. Positions 1309–1318 (KCSGRGRRRI) are enriched in basic residues. Residues 1309-1352 (KCSGRGRRRIASVPPPLHNSSQKGLEEEGPPCTPKPPGRARQAG) are disordered. Phosphoserine is present on residues S1391 and S1394. The disordered stretch occupies residues 1408-1428 (EEPKRRGTASRTRGQTRKGRS). The residue at position 1504 (S1504) is a Phosphoserine. Residues 1941–2036 (PQNTFYVLNP…SAALAVHGNL (96 aa)) enclose the Peptidase C50 domain. C2025 is a catalytic residue.

In terms of assembly, interacts with PTTG1. Interacts with RAD21. In terms of processing, autocleaves. This function, which is not essential for its protease activity, is unknown. Phosphorylated by CDK1. There is 8 Ser/Thr phosphorylation sites. Among them, only Ser-1121 phosphorylation is the major site, which conducts to the enzyme inactivation.

The protein resides in the cytoplasm. The protein localises to the nucleus. It carries out the reaction All bonds known to be hydrolyzed by this endopeptidase have arginine in P1 and an acidic residue in P4. P6 is often occupied by an acidic residue or by a hydroxy-amino-acid residue, the phosphorylation of which enhances cleavage.. Its activity is regulated as follows. Regulated by at least two independent mechanisms. First, it is inactivated via its interaction with securin/PTTG1, which probably covers its active site. The association with PTTG1 is not only inhibitory, since PTTG1 is also required for activating it, the enzyme being inactive in cells in which PTTG1 is absent. PTTG1 degradation at anaphase, liberates it and triggers RAD21 cleavage. Second, phosphorylation at Ser-1121 inactivates it. The complete phosphorylation during mitosis, is removed when cells undergo anaphase. Activation of the enzyme at the metaphase-anaphase transition probably requires the removal of both securin and inhibitory phosphate. Its function is as follows. Caspase-like protease, which plays a central role in the chromosome segregation by cleaving the SCC1/RAD21 subunit of the cohesin complex at the onset of anaphase. During most of the cell cycle, it is inactivated by different mechanisms. This chain is Separin (Espl1), found in Mus musculus (Mouse).